A 102-amino-acid chain; its full sequence is Urease subunit beta (102 aa).

The protein belongs to the urease beta subunit family. Heterotrimer of UreA (gamma), UreB (beta) and UreC (alpha) subunits. Three heterotrimers associate to form the active enzyme.

The protein localises to the cytoplasm. The catalysed reaction is urea + 2 H2O + H(+) = hydrogencarbonate + 2 NH4(+). It participates in nitrogen metabolism; urea degradation; CO(2) and NH(3) from urea (urease route): step 1/1. This is Urease subunit beta from Methylibium petroleiphilum (strain ATCC BAA-1232 / LMG 22953 / PM1).